A 92-amino-acid chain; its full sequence is Small ribosomal subunit protein uS19 (92 aa).

Belongs to the universal ribosomal protein uS19 family.

In terms of biological role, protein S19 forms a complex with S13 that binds strongly to the 16S ribosomal RNA. This Bifidobacterium longum subsp. infantis (strain ATCC 15697 / DSM 20088 / JCM 1222 / NCTC 11817 / S12) protein is Small ribosomal subunit protein uS19.